Here is a 263-residue protein sequence, read N- to C-terminus: MKPTTISLLQKCKQEKKRFATITAYDYSFAKLFADEGINVMLVGDSLGMTIQGHDSTLPVTVEDIAYHTRAVRRGAPNCLLLSDLPFMAYATPEQACENAAIVMRAGANMVKIEGGAWLVDTVKMLTERAVPVCGHLGLTPQSVNIFGGYKIQGRGDAGQVLLDDALALEAAGAQLLVLECVPVELAKRVTEALSIPVIGIGAGNVTDGQILVMHDAFGITGGHIPKFAKNFLAEAGDMRAAVQQYMAEVESGVYPGEEHSFH.

Mg(2+) is bound by residues Asp45 and Asp84. 3-methyl-2-oxobutanoate is bound by residues 45-46 (DS), Asp84, and Lys112. Glu114 contributes to the Mg(2+) binding site. Glu180 (proton acceptor) is an active-site residue.

Belongs to the PanB family. Homodecamer; pentamer of dimers. Mg(2+) serves as cofactor.

Its subcellular location is the cytoplasm. It carries out the reaction 3-methyl-2-oxobutanoate + (6R)-5,10-methylene-5,6,7,8-tetrahydrofolate + H2O = 2-dehydropantoate + (6S)-5,6,7,8-tetrahydrofolate. Its pathway is cofactor biosynthesis; (R)-pantothenate biosynthesis; (R)-pantoate from 3-methyl-2-oxobutanoate: step 1/2. Catalyzes the reversible reaction in which hydroxymethyl group from 5,10-methylenetetrahydrofolate is transferred onto alpha-ketoisovalerate to form ketopantoate. This chain is 3-methyl-2-oxobutanoate hydroxymethyltransferase, found in Salmonella enteritidis PT4 (strain P125109).